The chain runs to 379 residues: Queuine tRNA-ribosyltransferase (379 aa).

Asp94 acts as the Proton acceptor in catalysis. Residues 94 to 98, Asp148, Gln191, and Gly218 contribute to the substrate site; that span reads DSGGF. An RNA binding region spans residues 249–255; it reads GVGSPDA. Catalysis depends on Asp268, which acts as the Nucleophile. The segment at 273-277 is RNA binding; important for wobble base 34 recognition; the sequence is TRIAR. The Zn(2+) site is built by Cys306, Cys308, Cys311, and His337.

The protein belongs to the queuine tRNA-ribosyltransferase family. As to quaternary structure, homodimer. Within each dimer, one monomer is responsible for RNA recognition and catalysis, while the other monomer binds to the replacement base PreQ1. Zn(2+) serves as cofactor.

It carries out the reaction 7-aminomethyl-7-carbaguanine + guanosine(34) in tRNA = 7-aminomethyl-7-carbaguanosine(34) in tRNA + guanine. The protein operates within tRNA modification; tRNA-queuosine biosynthesis. Its function is as follows. Catalyzes the base-exchange of a guanine (G) residue with the queuine precursor 7-aminomethyl-7-deazaguanine (PreQ1) at position 34 (anticodon wobble position) in tRNAs with GU(N) anticodons (tRNA-Asp, -Asn, -His and -Tyr). Catalysis occurs through a double-displacement mechanism. The nucleophile active site attacks the C1' of nucleotide 34 to detach the guanine base from the RNA, forming a covalent enzyme-RNA intermediate. The proton acceptor active site deprotonates the incoming PreQ1, allowing a nucleophilic attack on the C1' of the ribose to form the product. After dissociation, two additional enzymatic reactions on the tRNA convert PreQ1 to queuine (Q), resulting in the hypermodified nucleoside queuosine (7-(((4,5-cis-dihydroxy-2-cyclopenten-1-yl)amino)methyl)-7-deazaguanosine). The protein is Queuine tRNA-ribosyltransferase of Staphylococcus epidermidis (strain ATCC 35984 / DSM 28319 / BCRC 17069 / CCUG 31568 / BM 3577 / RP62A).